A 327-amino-acid chain; its full sequence is 4-hydroxyproline 2-epimerase (327 aa).

Residue cysteine 85 is the Proton acceptor of the active site. Residues glycine 86–histidine 87, histidine 205, and aspartate 231 contribute to the substrate site. The Proton donor role is filled by cysteine 235. Residue glycine 236–threonine 237 coordinates substrate.

This sequence belongs to the proline racemase family.

The enzyme catalyses trans-4-hydroxy-L-proline = cis-4-hydroxy-D-proline. Catalyzes the epimerization of trans-4-hydroxy-L-proline (t4LHyp) to cis-4-hydroxy-D-proline (c4DHyp). Displays no proline racemase activity. This chain is 4-hydroxyproline 2-epimerase, found in Roseibium alexandrii (strain DSM 17067 / NCIMB 14079 / DFL-11) (Labrenzia alexandrii).